The chain runs to 298 residues: Ribosomal RNA small subunit methyltransferase A (298 aa).

Asparagine 35, leucine 37, glycine 62, glutamate 83, aspartate 108, and asparagine 133 together coordinate S-adenosyl-L-methionine.

This sequence belongs to the class I-like SAM-binding methyltransferase superfamily. rRNA adenine N(6)-methyltransferase family. RsmA subfamily.

Its subcellular location is the cytoplasm. It carries out the reaction adenosine(1518)/adenosine(1519) in 16S rRNA + 4 S-adenosyl-L-methionine = N(6)-dimethyladenosine(1518)/N(6)-dimethyladenosine(1519) in 16S rRNA + 4 S-adenosyl-L-homocysteine + 4 H(+). Its function is as follows. Specifically dimethylates two adjacent adenosines (A1518 and A1519) in the loop of a conserved hairpin near the 3'-end of 16S rRNA in the 30S particle. May play a critical role in biogenesis of 30S subunits. The chain is Ribosomal RNA small subunit methyltransferase A from Streptococcus pyogenes serotype M4 (strain MGAS10750).